We begin with the raw amino-acid sequence, 330 residues long: Tryptophan--tRNA ligase (330 aa).

ATP contacts are provided by residues 10-12 (QTT) and 18-19 (GN). The 'HIGH' region signature appears at 11–19 (TTGALHLGN). Aspartate 134 lines the L-tryptophan pocket. ATP-binding positions include 146 to 148 (GED), isoleucine 186, and 195 to 199 (KMSKS). A 'KMSKS' region motif is present at residues 195–199 (KMSKS).

It belongs to the class-I aminoacyl-tRNA synthetase family. As to quaternary structure, homodimer.

It localises to the cytoplasm. The catalysed reaction is tRNA(Trp) + L-tryptophan + ATP = L-tryptophyl-tRNA(Trp) + AMP + diphosphate + H(+). Catalyzes the attachment of tryptophan to tRNA(Trp). This is Tryptophan--tRNA ligase from Rickettsia prowazekii (strain Madrid E).